A 255-amino-acid chain; its full sequence is Small ribosomal subunit protein uS2 (255 aa).

This sequence belongs to the universal ribosomal protein uS2 family.

This is Small ribosomal subunit protein uS2 from Streptococcus thermophilus (strain CNRZ 1066).